The sequence spans 161 residues: uncharacterized protein (161 aa).

This sequence to R.leguminosarum PsiB.

This is an uncharacterized protein from Sinorhizobium fredii (strain NBRC 101917 / NGR234).